A 274-amino-acid chain; its full sequence is Large ribosomal subunit protein uL2cz/uL2cy (274 aa).

A disordered region spans residues 225-274 (PVDHPHGGGEGRAPIGRKKPVTPWGYPALGRRTRKRKKYSETLILRRRSK).

It belongs to the universal ribosomal protein uL2 family. As to quaternary structure, part of the 50S ribosomal subunit.

Its subcellular location is the plastid. It is found in the chloroplast. The sequence is that of Large ribosomal subunit protein uL2cz/uL2cy (rpl2-A) from Crucihimalaya wallichii (Rock-cress).